The chain runs to 122 residues: UPF0738 protein YjbL (122 aa).

It belongs to the UPF0738 family.

This chain is UPF0738 protein YjbL (yjbL), found in Bacillus subtilis (strain 168).